A 2110-amino-acid polypeptide reads, in one-letter code: Tenascin (2110 aa).

A signal peptide spans M1–G22. The N-linked (GlcNAc...) asparagine glycan is linked to N38. 3 positions are modified to phosphoserine: S65, S70, and S72. Residues E69–T91 are disordered. A glycan (O-linked (Xyl...) (chondroitin sulfate) serine) is linked at S72. Over residues T80–E89 the composition is skewed to polar residues. Residues D118–M142 are a coiled coil. Residues N166 and N184 are each glycosylated (N-linked (GlcNAc...) asparagine). The 12-residue stretch at C174 to C185 folds into the EGF-like 1; incomplete domain. EGF-like domains are found at residues S186–C216, S217–C247, G248–C279, N280–C310, S311–C341, G342–C372, S373–C403, G404–C434, S435–C465, S466–C496, R497–C527, A528–C558, K559–C589, and G590–S621. Disulfide bonds link C190–C200, C194–C205, C207–C216, C221–C231, C225–C236, C238–C247, C252–C263, C256–C268, C270–C279, C284–C294, C288–C299, C301–C310, C315–C325, C319–C330, C332–C341, C346–C356, C350–C361, C363–C372, C377–C387, C381–C392, C394–C403, C408–C418, C412–C423, C425–C434, C439–C449, C443–C454, C456–C465, C470–C480, C474–C485, C487–C496, C501–C511, C505–C516, C518–C527, C532–C542, C536–C547, C549–C558, C563–C573, C567–C578, C580–C589, C594–C604, C598–C609, and C611–C620. Residue N327 is glycosylated (N-linked (GlcNAc...) asparagine). Fibronectin type-III domains are found at residues P625–P715, E716–D804, A805–D894, A895–P988, K989–L1077, E1078–T1165, N1167–L1259, G1260–P1348, E1349–L1440, E1442–P1530, E1531–G1620, S1621–G1710, P1711–D1797, and S1798–L1886. N788 carries an N-linked (GlcNAc...) asparagine glycan. The residue at position 905 (T905) is a Phosphothreonine. 12 N-linked (GlcNAc...) asparagine glycosylation sites follow: N1018, N1079, N1093, N1119, N1184, N1210, N1275, N1301, N1354, N1364, N1394, and N1443. A glycan (N-linked (GlcNAc...) asparagine) is linked at N1718. Residues G1884–N2099 enclose the Fibrinogen C-terminal domain. 2 N-linked (GlcNAc...) asparagine glycosylation sites follow: N1969 and N2071.

It belongs to the tenascin family. Homohexamer; disulfide-linked. A homotrimer may be formed in the triple coiled-coil region and may be stabilized by disulfide rings at both ends. Two of such half-hexabrachions may be disulfide linked within the central globule. Interacts with CSPG4. Interacts (via the 3rd fibronectin type-III domain) with integrin ITGA9:ITGB1. N-glycosylated. As to expression, expressed in the corneal limbus, the periosteum and the rib molecular layer of the cerebellum, the matrix of kidney tubules, blood vessels, stomach and intestine (at protein level). Weakly expressed in the brain. In terms of tissue distribution, highly expressed in the thymus and moderately expressed in the brain.

The protein resides in the secreted. The protein localises to the extracellular space. Its subcellular location is the extracellular matrix. In terms of biological role, extracellular matrix protein implicated in guidance of migrating neurons as well as axons during development, synaptic plasticity as well as neuronal regeneration. Promotes neurite outgrowth when provided to neurons in culture. May play a role in supporting the growth of epithelial tumors. Ligand for integrins ITGA8:ITGB1, ITGA9:ITGB1, ITGAV:ITGB3 and ITGAV:ITGB6. In tumors, stimulates angiogenesis by elongation, migration and sprouting of endothelial cells. The polypeptide is Tenascin (Mus musculus (Mouse)).